The sequence spans 993 residues: MATSSFNINELVASHGDKGLLATALVDKTAHEQLEEQLQHQRRGRKVYIRNVLGVKDSEVIRNRYGGKYDLHLTQQEFAPHGLAGALRLCETLDCLDSFPSSGLRQDLVLDFGGSWVTHYLRGHNVHCCSPCLGIRDKMRHAERLMNMRKIILNDPQQFDGRQPDFCTHPAAECDVQAHFAISIHGGYDMGFRGLCEAMNAHGTTILKGTMMFDGAMMFDDQGVIPELNCQWRKIRSAFSETEDVTPLSGKLNSTVFSRVRKFKTMVAFDFINESTMSYVHDWENIRSFLTDQTYSYRGMTYGIERCVIHAGIMTYKIIGVPGMCPPELIRHCIWFPSIKDYVGLKIPASQDLVEWKTVRYLTSTLRETEEIAMRCYNDKKAWMEQFKVILGVLSAKSSTIVINGMSMQSGERIDINDYHYIGLAILLHTKMKYEQLGKMYDMWNASSISKWFAALTRPLRVFFSSVVHALFPTLRPREEKEFLIKLSTFVTFNEECSFDGGEEWDVISSAAYVATQAVTDGKVLAAQKAEKLAEKLAQPVIEVSDRPEAPSPTPDDPADVCGKEQEVSELDSLSAQTRSPITRVAERATAMLEYAAYEKQLHDTTVSNLKRIWNMAGGDDKRNSLEGNLKFVFDTYFTVDPMVNIHFSTGKWMRPVPEGIVYSVGFNEHGLGPKSDGELYIVNSECVVCNNESLSNVTRSLQAPTGTISQVDGVAGCGKTTAIKSIFEPSTDMVVTANKKSAQDVRMALFKSSDSKEACTFVRTADSVLLNECPTVSRVLVDEVVLLHFGQLCAVMSKLKAVRAICFGDSEQIAFSSRDASFDMRFSKIIPDETSDADTTFRSPQDVVPLVRLMATKALPRGTHSKYTKWVSQSKVKRSVTSRAISSVTLVDLDSSRFYITMTQADKASLISRAKEMNLPKTFWNERIKTVHESQGISEDHVTLVRLKSTKCDLFKQFSYCLVALTRHKVTFRYEHCGILNGDLIAECIARA.

Residues 51–409 are methyltransferase; sequence NVLGVKDSEV…TIVINGMSMQ (359 aa). The 219-residue stretch at 72–290 folds into the Alphavirus-like MT domain; sequence HLTQQEFAPH…HDWENIRSFL (219 aa). The segment at 543 to 576 is disordered; it reads EVSDRPEAPSPTPDDPADVCGKEQEVSELDSLSA. Residues 684–838 enclose the (+)RNA virus helicase ATP-binding domain; it reads NSECVVCNNE…KIIPDETSDA (155 aa). Residues 712 to 975 are ATP-dependent helicase; the sequence is VDGVAGCGKT…LTRHKVTFRY (264 aa). 714–721 is an ATP binding site; sequence GVAGCGKT. The 155-residue stretch at 839–993 folds into the (+)RNA virus helicase C-terminal domain; it reads DTTFRSPQDV…DLIAECIARA (155 aa).

The protein belongs to the bromoviridae replication protein 1a family. As to quaternary structure, interacts with RNA-directed RNA polymerase 2a.

It localises to the host endoplasmic reticulum membrane. Functionally, involved in the virus replication. Contains a helicase domain and a methyltransferase domain. The methyltransferase domain is probably involved in viral RNA capping. Involved in the formation of ER membrane spherular invaginations in which RNA replication complexes form. The protein is Replication protein 1a of Cucumber mosaic virus (strain Ixora) (CMV).